Here is a 358-residue protein sequence, read N- to C-terminus: Probable isocitrate dehydrogenase [NAD] subunit alpha, mitochondrial (358 aa).

4 residues coordinate substrate: Arg-108, Arg-118, Arg-139, and Asp-226. Residues Asp-226, Asp-250, and Asp-254 each coordinate Mg(2+).

Belongs to the isocitrate and isopropylmalate dehydrogenases family. Heterooligomer of subunits alpha, beta, and gamma in the apparent ratio of 2:1:1. Mg(2+) serves as cofactor. It depends on Mn(2+) as a cofactor.

The protein resides in the mitochondrion. The enzyme catalyses D-threo-isocitrate + NAD(+) = 2-oxoglutarate + CO2 + NADH. This Caenorhabditis elegans protein is Probable isocitrate dehydrogenase [NAD] subunit alpha, mitochondrial (idha-1).